A 1358-amino-acid polypeptide reads, in one-letter code: DNA-directed RNA polymerase subunit beta (1358 aa).

It belongs to the RNA polymerase beta chain family. As to quaternary structure, the RNAP catalytic core consists of 2 alpha, 1 beta, 1 beta' and 1 omega subunit. When a sigma factor is associated with the core the holoenzyme is formed, which can initiate transcription.

It catalyses the reaction RNA(n) + a ribonucleoside 5'-triphosphate = RNA(n+1) + diphosphate. DNA-dependent RNA polymerase catalyzes the transcription of DNA into RNA using the four ribonucleoside triphosphates as substrates. In Francisella tularensis subsp. mediasiatica (strain FSC147), this protein is DNA-directed RNA polymerase subunit beta.